Reading from the N-terminus, the 198-residue chain is MQYSRSVGRLIEELARLPGIGPKTAQRLAFHLVTAPREAAESLSRAILEARDKLVFCRVCANIADENPCGICRDQNRDHGLICVVERPRDVLAVEKAHGYRGLYHVLNGSLSPLQGVGPEELNIAALVTRVREGTVREVIVATNATVEGEATALYLARLLRPLNVRVTRLAFGLPVGSDLEYADGRTLARAIEGRREV.

The C4-type zinc-finger motif lies at 57-72 (CRVCANIADENPCGIC). In terms of domain architecture, Toprim spans 80-175 (GLICVVERPR…RVTRLAFGLP (96 aa)).

The protein belongs to the RecR family.

May play a role in DNA repair. It seems to be involved in an RecBC-independent recombinational process of DNA repair. It may act with RecF and RecO. In Desulforudis audaxviator (strain MP104C), this protein is Recombination protein RecR.